The chain runs to 251 residues: Coproheme decarboxylase (251 aa).

Residues R133, 147–151 (YPMSK), H174, Q187, and S225 contribute to the Fe-coproporphyrin III site. Y147 is a catalytic residue.

Belongs to the ChdC family. Type 1 subfamily. Homopentamer. Homohexamer in solution. Fe-coproporphyrin III is required as a cofactor.

The catalysed reaction is Fe-coproporphyrin III + 2 H2O2 + 2 H(+) = heme b + 2 CO2 + 4 H2O. It carries out the reaction Fe-coproporphyrin III + H2O2 + H(+) = harderoheme III + CO2 + 2 H2O. The enzyme catalyses harderoheme III + H2O2 + H(+) = heme b + CO2 + 2 H2O. It participates in porphyrin-containing compound metabolism; protoheme biosynthesis. Its function is as follows. Involved in coproporphyrin-dependent heme b biosynthesis. Catalyzes the decarboxylation of Fe-coproporphyrin III (coproheme) to heme b (protoheme IX), the last step of the pathway. The reaction occurs in a stepwise manner with a three-propionate intermediate. This Listeria monocytogenes serovar 1/2a (strain ATCC BAA-679 / EGD-e) protein is Coproheme decarboxylase.